The sequence spans 162 residues: Transcriptional repressor NrdR (162 aa).

A zinc finger spans residues 3–34 (CPFCQFEGLKVTDSRDAMEMNAIRRRRECLNC). The ATP-cone domain maps to 48–138 (VQVQKRDGTY…VYKRFKDLGE (91 aa)).

Belongs to the NrdR family. The cofactor is Zn(2+).

Negatively regulates transcription of bacterial ribonucleotide reductase nrd genes and operons by binding to NrdR-boxes. This is Transcriptional repressor NrdR from Protochlamydia amoebophila (strain UWE25).